The following is a 264-amino-acid chain: MISKAFFVRGDFQDCDTKGKERVVILLTVLCLLLGFLYAVIGYADFTVRHLSSTTLAFTNDLCAAYTSGSLVKTTWSGRAPFPTYMIALSTIIRSILFTMFGGVGMATLPLSLIFAFKNRPKCVTTRAQYVKVMALQEATDLAKRSNELKTATLGLQREERGGKKGRKFRKNVKKVQQADTSWALTVRNLALSIIWLLHIIVFMLVNPPAFPFLNQVFIQLDSAWGLLGTTTFAIFCYYLVMSVISGEMHLGMRLLLLSIHPMK.

4 helical membrane passes run Val23 to Tyr43, Ile96 to Ala116, Ile194 to Leu214, and Trp225 to Ile245.

The protein belongs to the LIMR family.

It is found in the membrane. The polypeptide is LIMR family protein SELMODRAFT_416716 (Selaginella moellendorffii (Spikemoss)).